The primary structure comprises 644 residues: Chaperone protein HtpG (644 aa).

Residues 1–352 are a; substrate-binding; the sequence is MNARVEQLEF…AQDMSLNVSR (352 aa). The b stretch occupies residues 353 to 566; the sequence is EILQQDRQIK…AFGITPALAR (214 aa). A c region spans residues 567 to 644; the sequence is LYRASGQDIP…ILADRLARTL (78 aa).

Belongs to the heat shock protein 90 family. Homodimer.

Its subcellular location is the cytoplasm. In terms of biological role, molecular chaperone. Has ATPase activity. This is Chaperone protein HtpG from Mycolicibacterium paratuberculosis (strain ATCC BAA-968 / K-10) (Mycobacterium paratuberculosis).